The following is a 185-amino-acid chain: Elongation factor P (185 aa).

The protein belongs to the elongation factor P family.

The protein localises to the cytoplasm. It participates in protein biosynthesis; polypeptide chain elongation. Functionally, involved in peptide bond synthesis. Stimulates efficient translation and peptide-bond synthesis on native or reconstituted 70S ribosomes in vitro. Probably functions indirectly by altering the affinity of the ribosome for aminoacyl-tRNA, thus increasing their reactivity as acceptors for peptidyl transferase. The polypeptide is Elongation factor P (Clostridium perfringens (strain ATCC 13124 / DSM 756 / JCM 1290 / NCIMB 6125 / NCTC 8237 / Type A)).